The sequence spans 449 residues: Probable glycine dehydrogenase (decarboxylating) subunit 1 (449 aa).

It belongs to the GcvP family. N-terminal subunit subfamily. In terms of assembly, the glycine cleavage system is composed of four proteins: P, T, L and H. In this organism, the P 'protein' is a heterodimer of two subunits.

It catalyses the reaction N(6)-[(R)-lipoyl]-L-lysyl-[glycine-cleavage complex H protein] + glycine + H(+) = N(6)-[(R)-S(8)-aminomethyldihydrolipoyl]-L-lysyl-[glycine-cleavage complex H protein] + CO2. Functionally, the glycine cleavage system catalyzes the degradation of glycine. The P protein binds the alpha-amino group of glycine through its pyridoxal phosphate cofactor; CO(2) is released and the remaining methylamine moiety is then transferred to the lipoamide cofactor of the H protein. The protein is Probable glycine dehydrogenase (decarboxylating) subunit 1 of Solibacter usitatus (strain Ellin6076).